A 342-amino-acid chain; its full sequence is tRNA dimethylallyltransferase (342 aa).

Glycine 39–threonine 46 contributes to the ATP binding site. Threonine 41–threonine 46 is a substrate binding site. The tract at residues aspartate 64 to glutamine 67 is interaction with substrate tRNA.

The protein belongs to the IPP transferase family. In terms of assembly, monomer. The cofactor is Mg(2+).

The catalysed reaction is adenosine(37) in tRNA + dimethylallyl diphosphate = N(6)-dimethylallyladenosine(37) in tRNA + diphosphate. In terms of biological role, catalyzes the transfer of a dimethylallyl group onto the adenine at position 37 in tRNAs that read codons beginning with uridine, leading to the formation of N6-(dimethylallyl)adenosine (i(6)A). This chain is tRNA dimethylallyltransferase, found in Chlamydia abortus (strain DSM 27085 / S26/3) (Chlamydophila abortus).